The primary structure comprises 482 residues: UDP-N-acetylmuramoyl-L-alanyl-D-glutamate--2,6-diaminopimelate ligase (482 aa).

S24 provides a ligand contact to UDP-N-acetyl-alpha-D-muramoyl-L-alanyl-D-glutamate. 105–111 (GTNGKTT) serves as a coordination point for ATP. UDP-N-acetyl-alpha-D-muramoyl-L-alanyl-D-glutamate-binding positions include 147 to 148 (TT), S174, Q180, and R182. N6-carboxylysine is present on K214. Residues R378, 402 to 405 (DNPR), G453, and E457 contribute to the meso-2,6-diaminopimelate site. The Meso-diaminopimelate recognition motif signature appears at 402 to 405 (DNPR).

It belongs to the MurCDEF family. MurE subfamily. It depends on Mg(2+) as a cofactor. Post-translationally, carboxylation is probably crucial for Mg(2+) binding and, consequently, for the gamma-phosphate positioning of ATP.

Its subcellular location is the cytoplasm. It carries out the reaction UDP-N-acetyl-alpha-D-muramoyl-L-alanyl-D-glutamate + meso-2,6-diaminopimelate + ATP = UDP-N-acetyl-alpha-D-muramoyl-L-alanyl-gamma-D-glutamyl-meso-2,6-diaminopimelate + ADP + phosphate + H(+). It functions in the pathway cell wall biogenesis; peptidoglycan biosynthesis. In terms of biological role, catalyzes the addition of meso-diaminopimelic acid to the nucleotide precursor UDP-N-acetylmuramoyl-L-alanyl-D-glutamate (UMAG) in the biosynthesis of bacterial cell-wall peptidoglycan. In Lawsonia intracellularis (strain PHE/MN1-00), this protein is UDP-N-acetylmuramoyl-L-alanyl-D-glutamate--2,6-diaminopimelate ligase.